We begin with the raw amino-acid sequence, 463 residues long: Argininosuccinate lyase (463 aa).

It belongs to the lyase 1 family. Argininosuccinate lyase subfamily.

The protein resides in the cytoplasm. The enzyme catalyses 2-(N(omega)-L-arginino)succinate = fumarate + L-arginine. Its pathway is amino-acid biosynthesis; L-arginine biosynthesis; L-arginine from L-ornithine and carbamoyl phosphate: step 3/3. This is Argininosuccinate lyase from Chlorobaculum parvum (strain DSM 263 / NCIMB 8327) (Chlorobium vibrioforme subsp. thiosulfatophilum).